The following is a 401-amino-acid chain: Chorismate synthase (401 aa).

Positions 40 and 46 each coordinate NADP(+). Residues 135 to 137, 256 to 257, glycine 300, 315 to 319, and arginine 341 each bind FMN; these read RAS, QA, and KPIST.

Belongs to the chorismate synthase family. Homotetramer. FMNH2 serves as cofactor.

It carries out the reaction 5-O-(1-carboxyvinyl)-3-phosphoshikimate = chorismate + phosphate. The protein operates within metabolic intermediate biosynthesis; chorismate biosynthesis; chorismate from D-erythrose 4-phosphate and phosphoenolpyruvate: step 7/7. Catalyzes the anti-1,4-elimination of the C-3 phosphate and the C-6 proR hydrogen from 5-enolpyruvylshikimate-3-phosphate (EPSP) to yield chorismate, which is the branch point compound that serves as the starting substrate for the three terminal pathways of aromatic amino acid biosynthesis. This reaction introduces a second double bond into the aromatic ring system. This is Chorismate synthase from Mycobacterium avium (strain 104).